The following is a 331-amino-acid chain: DNA-directed RNA polymerase subunit alpha (331 aa).

The alpha N-terminal domain (alpha-NTD) stretch occupies residues 1 to 226; sequence MLIAQRPTLT…ELFGLARELN (226 aa). The segment at 243 to 331 is alpha C-terminal domain (alpha-CTD); the sequence is LSSELSMPIE…SYDEDETTTN (89 aa).

This sequence belongs to the RNA polymerase alpha chain family. Homodimer. The RNAP catalytic core consists of 2 alpha, 1 beta, 1 beta' and 1 omega subunit. When a sigma factor is associated with the core the holoenzyme is formed, which can initiate transcription.

It catalyses the reaction RNA(n) + a ribonucleoside 5'-triphosphate = RNA(n+1) + diphosphate. Functionally, DNA-dependent RNA polymerase catalyzes the transcription of DNA into RNA using the four ribonucleoside triphosphates as substrates. The polypeptide is DNA-directed RNA polymerase subunit alpha (Clavibacter sepedonicus (Clavibacter michiganensis subsp. sepedonicus)).